Here is an 87-residue protein sequence, read N- to C-terminus: Small ribosomal subunit protein uS15c (87 aa).

Residues 1 to 20 (MNQNLSIRKRNKLKQDSGSP) are disordered.

This sequence belongs to the universal ribosomal protein uS15 family. Part of the 30S ribosomal subunit.

The protein localises to the plastid. The protein resides in the chloroplast. This is Small ribosomal subunit protein uS15c (rps15) from Zygnema circumcarinatum (Green alga).